Reading from the N-terminus, the 23-residue chain is Potassium channel toxin kappa-KTx 1.3 (23 aa).

Cystine bridges form between cysteine 4–cysteine 22 and cysteine 8–cysteine 18.

It belongs to the short scorpion toxin superfamily. Potassium channel inhibitor kappa-KTx family. Kappa-KTx 1 subfamily. In terms of assembly, monomer. Post-translationally, is not amidated. As to expression, expressed by the venom gland.

The protein resides in the secreted. Shows very weak blocking activity on voltage-gated potassium channels Kv10.1/KCNH1/EAG1 (6.2% inhibition by 40 uM of the toxin). Has no effect on the other voltage-gated potassium channels tested. This Heterometrus spinifer (Asia giant forest scorpion) protein is Potassium channel toxin kappa-KTx 1.3.